A 517-amino-acid chain; its full sequence is Cytochrome P450 1A1 (517 aa).

The mitochondrial targeting signal stretch occupies residues 34-45 (WQPRVPKGLKSP). A glycan (O-linked (GlcNAc) serine) is linked at serine 72. A substrate-binding site is contributed by phenylalanine 229. Heme is bound at residue cysteine 462.

This sequence belongs to the cytochrome P450 family. Interacts with cytosolic chaperones HSP70 and HSP90; this interaction is required for initial targeting to mitochondria. Interacts (via mitochondrial targeting signal) with TOMM40 (via N-terminus); this interaction is required for translocation across the mitochondrial outer membrane. Heme serves as cofactor.

It localises to the endoplasmic reticulum membrane. It is found in the mitochondrion inner membrane. The protein localises to the microsome membrane. Its subcellular location is the cytoplasm. It catalyses the reaction an organic molecule + reduced [NADPH--hemoprotein reductase] + O2 = an alcohol + oxidized [NADPH--hemoprotein reductase] + H2O + H(+). The catalysed reaction is estrone + reduced [NADPH--hemoprotein reductase] + O2 = 2-hydroxyestrone + oxidized [NADPH--hemoprotein reductase] + H2O + H(+). It carries out the reaction estrone + reduced [NADPH--hemoprotein reductase] + O2 = 4-hydroxyestrone + oxidized [NADPH--hemoprotein reductase] + H2O + H(+). The enzyme catalyses estrone + reduced [NADPH--hemoprotein reductase] + O2 = 6alpha-hydroxyestrone + oxidized [NADPH--hemoprotein reductase] + H2O + H(+). It catalyses the reaction estrone + reduced [NADPH--hemoprotein reductase] + O2 = 15alpha-hydroxyestrone + oxidized [NADPH--hemoprotein reductase] + H2O + H(+). The catalysed reaction is estrone + reduced [NADPH--hemoprotein reductase] + O2 = 16alpha-hydroxyestrone + oxidized [NADPH--hemoprotein reductase] + H2O + H(+). It carries out the reaction 17beta-estradiol + reduced [NADPH--hemoprotein reductase] + O2 = 2-hydroxy-17beta-estradiol + oxidized [NADPH--hemoprotein reductase] + H2O + H(+). The enzyme catalyses 17beta-estradiol + reduced [NADPH--hemoprotein reductase] + O2 = 4-hydroxy-17beta-estradiol + oxidized [NADPH--hemoprotein reductase] + H2O + H(+). It catalyses the reaction 17beta-estradiol + reduced [NADPH--hemoprotein reductase] + O2 = 6alpha-hydroxy-17beta-estradiol + oxidized [NADPH--hemoprotein reductase] + H2O + H(+). The catalysed reaction is 17beta-estradiol + reduced [NADPH--hemoprotein reductase] + O2 = 7alpha-hydroxy-17beta-estradiol + oxidized [NADPH--hemoprotein reductase] + H2O + H(+). It carries out the reaction 17beta-estradiol + reduced [NADPH--hemoprotein reductase] + O2 = 15alpha-hydroxy-17beta-estradiol + oxidized [NADPH--hemoprotein reductase] + H2O + H(+). The enzyme catalyses (5Z,8Z,11Z)-eicosatrienoate + reduced [NADPH--hemoprotein reductase] + O2 = 19-hydroxy-(5Z,8Z,11Z)-eicosatrienoate + oxidized [NADPH--hemoprotein reductase] + H2O + H(+). It catalyses the reaction (5Z,8Z,11Z,14Z)-eicosatetraenoate + reduced [NADPH--hemoprotein reductase] + O2 = 16-hydroxy-(5Z,8Z,11Z,14Z)-eicosatetraenoate + oxidized [NADPH--hemoprotein reductase] + H2O + H(+). The catalysed reaction is (5Z,8Z,11Z,14Z)-eicosatetraenoate + reduced [NADPH--hemoprotein reductase] + O2 = 17-hydroxy-(5Z,8Z,11Z,14Z)-eicosatetraenoate + oxidized [NADPH--hemoprotein reductase] + H2O + H(+). It carries out the reaction (5Z,8Z,11Z,14Z)-eicosatetraenoate + reduced [NADPH--hemoprotein reductase] + O2 = 18-hydroxy-(5Z,8Z,11Z,14Z)-eicosatetraenoate + oxidized [NADPH--hemoprotein reductase] + H2O + H(+). The enzyme catalyses (5Z,8Z,11Z,14Z)-eicosatetraenoate + reduced [NADPH--hemoprotein reductase] + O2 = 19-hydroxy-(5Z,8Z,11Z,14Z)-eicosatetraenoate + oxidized [NADPH--hemoprotein reductase] + H2O + H(+). It catalyses the reaction (5Z,8Z,11Z,14Z,17Z)-eicosapentaenoate + reduced [NADPH--hemoprotein reductase] + O2 = 19-hydroxy-(5Z,8Z,11Z,14Z,17Z)-eicosapentaenoate + oxidized [NADPH--hemoprotein reductase] + H2O + H(+). The catalysed reaction is (5Z,8Z,11Z,14Z)-eicosatetraenoate + reduced [NADPH--hemoprotein reductase] + O2 = (8R,9S)-epoxy-(5Z,11Z,14Z)-eicosatrienoate + oxidized [NADPH--hemoprotein reductase] + H2O + H(+). It carries out the reaction (5Z,8Z,11Z,14Z)-eicosatetraenoate + reduced [NADPH--hemoprotein reductase] + O2 = (11R,12S)-epoxy-(5Z,8Z,14Z)-eicosatrienoate + oxidized [NADPH--hemoprotein reductase] + H2O + H(+). The enzyme catalyses (5Z,8Z,11Z,14Z)-eicosatetraenoate + reduced [NADPH--hemoprotein reductase] + O2 = (14S,15R)-epoxy-(5Z,8Z,11Z)-eicosatrienoate + oxidized [NADPH--hemoprotein reductase] + H2O + H(+). It catalyses the reaction (5Z,8Z,11Z,14Z)-eicosatetraenoate + reduced [NADPH--hemoprotein reductase] + O2 = (14R,15S)-epoxy-(5Z,8Z,11Z)-eicosatrienoate + oxidized [NADPH--hemoprotein reductase] + H2O + H(+). The catalysed reaction is (5Z,8Z,11Z,14Z,17Z)-eicosapentaenoate + reduced [NADPH--hemoprotein reductase] + O2 = (17R,18S)-epoxy-(5Z,8Z,11Z,14Z)-eicosatetraenoate + oxidized [NADPH--hemoprotein reductase] + H2O + H(+). It carries out the reaction (4Z,7Z,10Z,13Z,16Z,19Z)-docosahexaenoate + reduced [NADPH--hemoprotein reductase] + O2 = (19S,20R)-epoxy-(4Z,7Z,10Z,13Z,16Z)-docosapentaenoate + oxidized [NADPH--hemoprotein reductase] + H2O + H(+). The enzyme catalyses (4Z,7Z,10Z,13Z,16Z,19Z)-docosahexaenoate + reduced [NADPH--hemoprotein reductase] + O2 = (19R,20S)-epoxy-(4Z,7Z,10Z,13Z,16Z)-docosapentaenoate + oxidized [NADPH--hemoprotein reductase] + H2O + H(+). It catalyses the reaction all-trans-retinol + reduced [NADPH--hemoprotein reductase] + O2 = all-trans-retinal + oxidized [NADPH--hemoprotein reductase] + 2 H2O + H(+). The catalysed reaction is all-trans-retinal + reduced [NADPH--hemoprotein reductase] + O2 = all-trans-retinoate + oxidized [NADPH--hemoprotein reductase] + H2O + 2 H(+). It carries out the reaction (13S)-hydroperoxy-(9Z,11E)-octadecadienoate = 13-oxo-(9Z,11E)-octadecadienoate + H2O. The enzyme catalyses (12S)-hydroperoxy-(5Z,8Z,10E,14Z)-eicosatetraenoate = 12-oxo-(5Z,8Z,10E,14Z)-eicosatetraenoate + H2O. It catalyses the reaction (15S)-hydroperoxy-(5Z,8Z,11Z,13E)-eicosatetraenoate = 15-oxo-(5Z,8Z,11Z,13E)-eicosatetraenoate + H2O. The catalysed reaction is (5S)-hydroperoxy-(6E,8Z,11Z,14Z)-eicosatetraenoate = 5-oxo-(6E,8Z,11Z,14Z)-eicosatetraenoate + H2O. The protein operates within steroid hormone biosynthesis. It participates in lipid metabolism; fatty acid metabolism. It functions in the pathway cofactor metabolism; retinol metabolism. Its function is as follows. A cytochrome P450 monooxygenase involved in the metabolism of various endogenous substrates, including fatty acids, steroid hormones and vitamins. Mechanistically, uses molecular oxygen inserting one oxygen atom into a substrate, and reducing the second into a water molecule, with two electrons provided by NADPH via cytochrome P450 reductase (CPR; NADPH-ferrihemoprotein reductase). Catalyzes the hydroxylation of carbon-hydrogen bonds. Exhibits high catalytic activity for the formation of hydroxyestrogens from estrone (E1) and 17beta-estradiol (E2), namely 2-hydroxy E1 and E2, as well as D-ring hydroxylated E1 and E2 at the C15alpha and C16alpha positions. Displays different regioselectivities for polyunsaturated fatty acids (PUFA) hydroxylation. Catalyzes the epoxidation of double bonds of certain PUFA. Converts arachidonic acid toward epoxyeicosatrienoic acid (EET) regioisomers, 8,9-, 11,12-, and 14,15-EET, that function as lipid mediators in the vascular system. Displays an absolute stereoselectivity in the epoxidation of eicosapentaenoic acid (EPA) producing the 17(R),18(S) enantiomer. May play an important role in all-trans retinoic acid biosynthesis in extrahepatic tissues. Catalyzes two successive oxidative transformation of all-trans retinol to all-trans retinal and then to the active form all-trans retinoic acid. May also participate in eicosanoids metabolism by converting hydroperoxide species into oxo metabolites (lipoxygenase-like reaction, NADPH-independent). The polypeptide is Cytochrome P450 1A1 (CYP1A1) (Felis catus (Cat)).